A 11103-amino-acid chain; its full sequence is MGTIKTKFKNNYLKNSYLFIIYIILFNLVIGIANSEALGVPSKIRPGRYGEICSNCTPKKSYLDFSLISPTGFELVDNAELEWTKDFPSVKVSVNGSQNPVIMGQTHHYSELLENVNFFNITGRTDIKSLMHYSCGNATSSVVFEFTKPVERFLLLIFGVNSEVSLVVDSYDAYGYPVNMLNWDTLDHGLLSTHYPSNTSIHHPPAVKQSHNSATLDLTWSNKGFNTYIILEPNQMISKIILSVKGVHCNEEICKGQALYYSLVALGDCQDSNLFAVGNYVFFDVNRDGVHETTELFAPNVKVELYDAISSTRLIASTFTDLNGKYFFDNLPEGAYVVKIYPPSDYMISSNGPDNVINAITSFSNSFVLTINGTNVVPVPPNSGINATYWNPKINGGITLIRYAISGNVCNDHDDNGVSDGNLSGITVQLTTPSHVVLKTAQTDYAGNYVFDDLSEGVYSVHFILPENYYFSTASLSRLSPGGYLDGLQLSQNTTTLTQSSPNVLILPTTNHLLSNVNICMKTKTFALSGFTFKDANSDGLYLLANQDLPLPGVVVQLFKSGQSAIPLATTTTDSLGKYFFDLIVSGDYDIHFNAPDGYHDTKTSSQSLADSNGWIRSAKVNDNTVVPNTNPSIKATDVLQNQNAGFTLNQYGIGSHVWLDSNRDSERGPTETTGVANVTVNLLLNGVVVATTKTSADGSYSFDGLAAGVYNAQFILPSNLYKFSPQFDESRPDTTGLVQQINLTPQNPQLVAGTGLPPYPLANKIDPTVNAGVYKVDFAIGDLVWIDKDSNGVFNPATDQGAPFVTINLVNEKTSELLTTQSAQDGSYSFNHLAAGNYCIHFVIPQGYKAVTTSYYSVGDENGEVCFTLNVENSDSASSYTKHYLTPLLGDYIDDTLDQGIVMSTFAIGDFVFIDSNRDGLYQSSTETPAEGVKVVLSQSGHLVADTLTDSKGHYVFDNIQTGVYDIAFIIPSGYQVTSPSSDNKANSLGLVSTIDLSFNDDQVTPVNPSIDGPLKASFIDRTIDAGLVRPLFTIGTHAWIDENNNLIDDDISNGLPNITMTLINNAEGGKVVQSVSTDSKGQYSFTNVPEGDYCVVATNSNPSLSLLPKSADSPFDAAGKYCFVLVAGDNPSKTDANIGYTTKLSVGQFIWVDSNNDGSFDKSKENLLSNTLVTVTITNQKTGQIQSVETSKGDYQFIGLLPGDYCVQMTIPDNFKQVVMGVDSPFNSSAISCFNLNSTSRNDINFGLVPLYPVGDKIWIDPFNTGKQLPDSPGISNIPLSLISQKTNQIISSVVTDSNGKYQFEDVPPGDYCIKATINRDQYSLVNKSLDSPFQVSNTNNVESCFTVSGPLDNQDLGLTPFLEIGTFVWVDGKGNNLYEKSKNDILKSDVSITLTNIGSGDSVSTITDSEGKYNFNHLLAGDYCIKATQPVPYQFVVTSDDSVVDSKGEYCFKLTESNPNINIGLVPLNSIGSVSWLDKNNNGNREDNEFLPGVELSLQDSNGKVLDTTTTDESGNYKFDNLLPGDYCIIATTPIGSIPVTGSSDNLFVDDKYCLTFTGPQPIDRTDVNPGFVSTLDIGQYVWIDKNNNGKEESDEPLLPGVQVIITSPNGTKIADLVTDENGKYALKDQVPGSYCVQMVIPPHYKQVSQSEDSPFDSDVKYCFDLIDESITNANLGLIPLFNVGDKVWLDPFNTGKQTDDSPPLSDITIRLTDKDGNEISNTKSGPDGKYQFEDVPPGDYCVEADIPKDQYKPVNTSSDSPFSADSTNDSFVTVKYCFTITDHDVKPPIGVTPFYEIGTFVWIDSNNNDKFEQPSDIKKSDVSITLTNSGNGETSTIQTDANGEYNFNHLLASDYCIKATEPNKYQFVVTSDDSVVDSTGEYCFKLTQSNPNINIGLVPLNSIGSVSWLDKNNNGNKEDNEFLPGVELSLQDSNGKVLETTTTDESGNYKFDNLLPGDYCIVTTTPIGSIPVTSSPDNLFVDDKYCLTFTGPQPIDRTDVNPGFVSTLDIGQYVWIDKNNNGKEEPDEPLLPGVQVIITSPNGTSIANLVTDENGKYALKDQVPGSYCVQMIIPDHYKQVAQSEDSPFDLDVKYCFDLDDKSITNANLGLIPLYPIGDTVWLDPFNTGKRTDDSPGVEGIELNLVDKDGKVIQSTTSGPNGKYQFEDVPPGDYCIEAKIPNDQYKPVNTSSDSPFSPTSDNSIVKSCLTVSGPLDNQNLGLSPFYEIGTIVWIDSNNNDKFEQPSDIGKSDVSITLTNSGNGETSTIQTDVDGNYNFNHLLAGDYCIKATEPNKYQFVVTSDDSVVNSTGEYCFKLTQSNPNINIGLVPLNSIGSVSWLDKNNNGNKEDNEFLPGVELSLQDSNGKVLDTTTTDESGNYKFDNLLPGDYCIVATTPIGSIPVTSSPDNLFVNNKYCLTFTGPQPIDRTDVNPGFVSTLDIGQYVWIDKNNNGKEESDEPLLPGVQVIITSPNGTKIADLVTDENGNYALKDQVPGSYCVQMVIPPHYKQVSQSEDSPFDLDVKYCFDLDDKSITNANLGLIPLFNVGDKVWLDPFNTGKQTDDSPPLSDITIRLTDKDGNEITNTKSGPDGKYQFEDVPPGDYCVEADIPKDQYKPVNTSSDSPFSVDSTNDNFVTVKYCFTITDHDVKPPIGVTPFYEIGTFVWIDSNNNDKFEQPSDIKKSDVSITLTNSGNGETSTIQTDADGEYNFNHLLAGDYCIKATEPNKYQFVVTSDDSVVDSTGEYCFKLTQSNPNINIGLVPLNSIGSVSWLDKNNNGNKEDNEFLPGVELSLQDPNGTVFETTTTDESGSYKFGNLLPGDYCIVATTPIGSIPVTSSPDNLFVNNKYCLTFTGPQPIDRIDVNPGFVSTLDIGQYVWIDKNNNGKEESDEPLLPGVQVIITSSNGTKIADLVTDENGKYALKDQVPGSYCVQMIIPDHYKQVSQSEDSPFDSDVKYCFDLIDESITNANLGLIPLYPIGDTVWLDPFNTGKRTDDSPGLEGIELQLVDKDGKVIQSTTSGPDGKYQFEDVPPGDYCIEATIPNDTYQSVNTSSDSPFSPTSDNSIVKSCFAVSGPLDNQNLGLSPFYEIGTIVWIDSNNNDKFEQPNDIGKSNVSITLTNSGNGEMYSTISNTDGEYNFNHLLAGDYCIKVTEPDQYKFVVTSDDSVVDSTGEYCFKLTESNPNINIGLVPLNSIGSVSWLDKNNDGKRQDNEFLPGVELSLQDPNGIVIQTITTDSDGNYYFDNLLPGDYCISATTPIGSIPVTSSPDNLFVDGKYCLTFTGPLPTDRTDVNPGFVSTLDIGQYVWIDKNNNGKEEPDEPLLPGVQVIITSSNGTKIADLVTDENGKYALKDQVPGSYCVQMIISDHYKQVAQSEESPFDSDVKYCFDLIDESITNANLGLIPLYPIGDTVWLDQFNTGKRTDDSPGVEGIELQLVDKDGKVIQSTTSGPDGKYQFEDVPPGDYCIEATIPNDQYKPVNTSSDSPFSPTSDESIVKSCFAVSGPLDNQNLGLSLFYEIGTMVWIDSNNNGKFEQPSDVLKSDVSITLTNSGNGETSTIQTDVDGNYNFNHLLAGDYCIKATQPDQYQFVVTSDDSVVDSTGEYCFKLTQSNPNINIGLVPLNSIGSVSWLDKNNNGKKEDNEFLPGVELSLQDSNGKVLDTTTTDESGSYKFDNLLPGDYCIVTTTPIGSIPVTSSPDNLFVNNKYCLTFTGPQPIDRTDVNPGFVSTLDIGQYVWIDKNNNGKEEPDEPLLPGVQVIITSPNGTSIANLVTDENGKYTLKDQVPGSYCVQMIIPPHYKQVAQSEDSPFDLDVKYCFDLVNESISNANLGLVPLFKVGDKVWLDPFNTGKQTDDSPPLSDITIRLTDKDGKVIQSTTSGPDGKYQFEDVPPGDYCVEAYIPKDQYKPVNTSSDSPFSVDSTNDNFVTVRYCFTITDHDVKPPIGVTPFYEIGTIVWIDSNNNDRFEQPSDIGKSDVSITLTNSGNGETSTIQTDVDGEYNFNHLLAGDYCIKATEPNKYQFVVTSDDSVVDSTGEYCFKLTQSNPNINIGLVPLNSIGSVSWLDKNNNGNKEDNEFLPGVELSLQDSNGKVLDTTTTDESGNYKFDNLLPGDYCIVVTTPIGSIPVTSSPDNLFVDDKYCLTFTGPQPIDRTDVNPGFVSTLDIGQYVWIDKNNNGKEESDEPLLPGVQVIITSPNGTSIANLVTDENGKYTLKDQVPGSYCVQMVSPPHYKQVSQSEDSPFDSDIKYCFDLDDKSITNANLGLVPLFNVGDKVWLDPFNTGKQTDDSPPLSDITIRLTDKDGNEITKTKSRPDGNENSNTKSGPDGKYQFEDVPPGDYCVEADIPKDQYKPVNTSSDSPFSVDSTNDNFVTVKYCFTITDHDVKPPIGVTPFYEIGTFVWIDSNNNDKFEQPSDIKKSDVSITLTNSGNGETSTIQTDVDGNYNFNHLLAGDYCIKATEPNKYQFVVTSDDSVVDSTGEYCFKLTESNPNINIGLVPLNSIGSVSWLDKNNNGKKEDNEFLPGVELSLQDSNGKVLDTTTTDESGNYKFDNLLPGDYCIVATTPIGSIPVTSSPDNLFVNNKYCLTFTGPQPIDRTDVNPGFVSTLDIGQYVWIDKNNNGKEESDEPLLPGVQVIITSSNGTKIADLVTDENGKYALKDQVPGSYCVQMIIPDHYKQVSQSEDSPFDSDVKYCFDLEDKSITNANLGLVPLYNLGDTVWLDPFNTGKRTDDSPGVEGIPLTLIDKYGNSIQSTASGPNGKYQFEDVPPGDYCIEASVPRKYQVENTSSDSPFSVVLPLPTSSIEPIKSRYCFTVTEPVNNANLGLIPFLEIGTFVWIDSNNNDKFEQPSDIKQSDVPITLTNSGNGETSTIQTDVDGNYNFNHLLAGDYCIKATEPNKYQFVVTSDDSVVNSTGEYCFKLTESNPNINIGLVPLNSIGSFAWLDKDNDGLASEGESLPGVELSLQDSNGKVLETTTTDESGNYKFDNLLPGDYCIVATTPIGSIPVTSSPDNLFVDDKYCLTFTGPQPIDRYDVNPGFVSTLDIGQYVWIDKNNNGKEESDEPLLPGVQVIITSPNGTKIADLVTDENGNYALKDQVPGSYCIQMIIPPHYKQVAQSEDSPFDSDVKYCFDLIDESITNANLGLVPLYPIGDTVWLDPFNTGKRTDDSPGLEGIELQLVDKDGKVIQSTTSGPNGKYQFEDVPPGDYCIEATISNDILRAVNTSSDSPFSPTSDESIVKSCFAVSGPLDNQNLGLSPFYEIGTIVWIDSNNNDKFEQPSDIGKSNVSITLTNSGNGETSTIQTDVDGNYNFNHLLAGDYCIKVTQPDQYQFVVTSDDSVVNSTGEYCFKLTQSNPNINIGLVPLNSIGSVSWLDKNNNGNKEDNEFLPGVELSLQDSNGKVLDTTTTDESGNYKFDNLLPGDYCIVSTTPIGSIPVTSSPDNLFVDDKYCLTFTGPQPIDRYDVNPGFVSTLDIGQYVWIDKNNNGKEESDEPLLPGVQVIITSPNGTKIADLVTDENGNYALKDQVPGSYCVQMVIPPHYKQVAQSEDSPFDSDVKYCFDLIDESITNANLGLIPLFKVGDKVWLDPFNTGKQTDDSPPLSDITIRLTDKDGNEITNTKSGPDGKYQFEDVPPGDYCVEADILKDQYKPVNTSSDSPFSVDSTNDNFVTVKYCFTITDHDVKPPIGVTPFYEIGTFVWIDSNNNDNFEQPSDIKKSDVSITLTNSGNGETSTIQTDVDGNYNFNHLLAGDYCIKVTEPNKYQFVVTSDDSVVDSTGEYCFKLTQSNPNINIGLVPLNSIGSVSWLDKNNNGNKEDNEFLPGVELSLQDSNGKVLDTTTTDESGNYKFDNLLPGDYCIVATTPIGSIPVTSSPDNLFVDDKYCLTFTGPQPIDRTDVNPGFVSTLDIGQYVWIDKNNNGKEESDEPLLPGVQVIITSPNGTKIADLVTDENGNYALKDQVPGPYCVQMVIPPHYKQVVQSEDSPFDSDVKYCFDLVDKSITNANLGLIPLYPIGDTVWLDPFNTGKRTDDSPGVEGIELNLVDKDGKVIQSTTSGPDGKYQFEDVPPGDYCIEATIPNDQYKPVNTSSDSPFSPTSDESIVKSCFKVSGPLDNQNLGLSPFYEIGTIVWIDSNNNDKFEQPSDIGKSNVSITLTNSGNGETSTIQTDVDGNYNFNHLLAGDYCIKATQPDQYQFVVTSDDSVIDSTGEYCFKLTQSNPNINIGLVPLNSIGSVSWLDKNNNGNKEDNEFLPGVELSLQDSNGKVLETTTTDESGNYKFDNLLPGDYCIVATTPIGSIPVTSSPDNLFVNNKYCLTFTGPQPIDRYDVNPGFVSTLDIGQYVWIDKNNNGKEESDEPLLPGVQVIITSPNGTKIADLVTDENGNYALKDQVPGSYCVQMVIPPHYKQDAQSEDSPFDSDVKYCFDLVDKSITNANLGLIPLFNVGDKVWLDPFNTGKQTDDSPPLSDITIRLTDKDGNEITNTKSGPDGKYQFEDVPPGDYCVEADILKDQYKPVNTSSDSPFSADSTNDSFVTVKYCFTITDHDVKPPIGVTPFYEIGTFVWIDSNNNDKFEQPSDIKKSDVSITLTNSGNGETSTIQTDADGEYNFNHLLAGDYCIKATEPNKYQFVVTSDDSVVDSTGEYCFKLTQSNPNINIGLVPLNSIGTFAWLDKDNDGLATAEESLEGVELSLQDPNGTVLQTITTDESGNYKFDNLLPGDYCIVGTTPIGSIPVTGSPDNLFVNNKYCLTFTGPQPIDRTDVNPGFVPTLDIGQYVWIDKNNNGKEEPDEPLLPGVQVIITSPNGTSIANLFTDENGKYALKDQVPGSYCVQMIIPDHYKQVNQSEDSPFDSDVKYCFDLEDKSITNANLGLVPLYNLGDSVWLDPFNTGKRTDDSPGVEGIPLTLIDKYGNSIQSTASGPNGKYQFEDVPPGDYCIEASVPRKYQVENTSSDSPFSVVLPLPTSSIEPIKSRYCFTVTEPVNNANLGLIPFLEIGTFVWIDSNNNDKFEQPSDIKQSDVSITLTNSGNGETSTIQTDSNGNYKFNNLLAGDYCIKVTEPNKYQFVVTSDDSVVNSTGEYCFKLTQSNPNINIGLVPLNSIGTFAWLDKDNDGLATAGESLAGVELSLQDPNGTLFETTTTDESGYYLFYELLPGDYCIVATTPIGSIPVTGSPDNLFVNNKYCLTFTGPQPIDRYDVNPGFVSTLDIGQYVWIDKNNNGKEEPDEPLLPGVQVIITSPNGTKIADLVTDENGNYALKDQVPGSYCVQMVIPPHYKQDAQSEDSPFDSDVKYCFDLVDKSITNANLGLIPLFNVGDKVWLDPFNTGKQTDDSPPLSDITIRLTDKDGNEITNTKSGPDGKYQFEDVPPGDYCVEADIPKDQYKPVNTSSDSPFSADSTNDSFVTVKYCFTITDHDVKPPIGVTPFYEIGTFVWIDSNNNDKFEQPSDIKKSDVSITLTNSGNGETSTIQTDADGEYNFNHLLAGDYCIKATEPNKYQFVVTSDDSVVDSTGEYCFKLTQSNPNINIGLVPLNSIGSVSWLDKNNNGKRENNEFLPGVELSLQDSNGKVLDTTTTTDESGNYKFDNLLPGDYCIVGTTPIGSIPVTGSPDNLFVDNKYCLTFTGPQPIDRTDVNPGFVSTLDIGQYVWIDKNNNGKEESDEPLLTGVQVIITSPNGTSIANLVTDENGKYALKDQVPGSYCVQMIIPDHYKQVAQSEDSPFDSDVKYCFDLVDTSITNANLGLIPLYPIGDSVWLDPFNTGKRTDDSPGVEGIELNLVDKDDKVIQSTTSGPDGKYQFEDVPPGDYCIEAEFPSDTYQAVNTSSDSPFSPTSNESIVKSCFKVSGPLDNQNLGLSPFYEIGTIVWIDSNNNDKFEQPSDIGKSDVSITLTNSGNGETSTIQTDVDGNYNFNHLLAGDYCIKVTQPDQYQFVVTSDDSVVDSTGEYCFKLTQSNPNINIGLVPLNSIGSVSWLDKNNNGKKEDNEFLPGVELSLQDPSGKVLDTTTTDESGNYKFDNLLPGDYCIVATTPIGSIPVTSSPDNLFVNNKYCLTFTGPQPIDRTDVNPGFVSTLDIGQYVWIDKNNNGKEEPDEPLLPGVQVIITSPNGTKIADLVTDENGKYALKDQVPGPYCVQMVIPDHYKQVAQSEDSPFDSDVKYCFDLVDKSIANANLGLIPLYPIGDTVWLDSFNTGIQLENSPGIPNIVLTLTDKNGNTIIKSIPTDDIGKYQFDDVEPGDYCIKVSVPSDYSPVNKSSDSPFSLSSQSDVESCFTVSGPTDNQDLGLIPLLKIGTIVWIDSNNNNVYDKPVDVGKSEFQIKLTNTGSGQSSTTQTDSNGNYHFDHLLPGNYCIETTTPIKYHFVQPSKDSVVDQTTGKYCFLLTQSNPNINIGISPLNSIGSVSWLDKNNNGNKEDNEFLPGVELSLQDSNGKVLQTTTTNESGNYKFDNLPQGDYCIIATTPIGSIPVTGSSDNLFVNNKYCLTFTGPQPIDRTDVNPGFVPTLDIGQYVWIDKNNNGKEESDEPLLPGIQIHIFSPNGTSIANLVTDENGKYALKDQVPGSYCVQMVIPPHYEQVAQSKDSPFDSDVKYCFDLLDKSITNANLGLIPLYNIGSDAWLDNLNNGVRRNDSLLVPNVTMSLYDNNGNLIETTITNSSGKYQFNDIQPGSYCVRATVPSNYLADSYSEVSPFKNFTDTSPTNPLAELQYCFAVTDSNVLNANIGLIPYLVVDGTTWVDLDLSKFLSSSDLLLPNVTVQLYDKVSGNILAATRSDDKGGYVVPNLLPSADYCVQFEVPPGYIVVVDSDDSVTNSTGGFCFPLFGDMSDVNLGLDTIFGVGYIAWLDINNDGKRQDNEFLSDVELSLIDPLGNVIETTKTDINGNYMFYPLLMGKYCLNATTPLGTIPVTGSKDSPFINGQYCVRLNGHIPYNNTNVNPGFVSTLDIGQYVWIEKNNNGIKELDEPLLPGVSVSLFSPNGTSIANTITDENGKYAFKDQVPGSYCIKMIIPPHYQQVIQSQDSPFNKSTIYCFDLTTSSITNANLGLTPLLTVGDTAWLDPLNTGKRLPTSAGVPNITMTLLDSQGKQINSTITNANGFYQFVDVAPGNYCMSAGPINSALYKFVNTSLDSPFILSTSKNVTTYCFNVNATNLTNVNVGLTPFYTLGDNVWIDKLNNGIKDLDDPLQANVSLSLVNTGNSEIKTTTTNSQGKYSFGQLLAGNYCLTASVPQNFKAVTKSNDSPFSPIGGDSNTQQYCFTLSGNKNDANLGLVPLYCVGKYVWIDINGNGHPEPTEEPYRNLTITLTPNNTALPTQTTTTDVNGNYRFDNLVVGNYCVSLSIIDNYIMTKITNDSVFNPQGLSCFTINYGDPICRNDINGGLIPPIFSIGDFVFRDVNGNGLFDSAQDTPLVNITVRLLNLFNTTLMTTTTDSQGIYHFVNVEQGDYVVQFGYPKQLKPSPITDQSKVNSRGRVSVSLRINSPDVTASIASDKVPTYYINRNIDAGFTTEYLSIGFIVFNDDNKDGQMQPSEMGMANITVFLRSGSNLSQTIATTTTDANGTYIFTHLAPGNYCVSLTVPKEFYPTLLTPTTFNRGDSNAIACTNVSVFSPTVQRFSIPSHTEDTYQDATVNFGLAPYKYAVGTYIWVDKNGNGGAESYEPAVEGITVRIYDSNFNFITSTVTNPSGIYIFDNLYPGVYNLAITPPVGFTISNNTLQDNKANATGYISIDLSQNDKALMLIDSTWNLKANYINIYQDFGIVPPKIAIGRFVFLDINNNGKKDVDEPGIANVTISIGSKTKQTDANGFYIFDNLETGNDCLTFIPPNPTYQLGISGPDNFLKGNNTLCLDIEIYNNTLRTVPSDNLKAFNKNYTFNVGYVPQSFIIGDTIWIDSNNNSLLDNGEVGADGIKVELLVSSDLSPALDILGKPISSQVTTANGKYLFQNVSSGPSYVVRLTIPANSTKYIAGTTYSPILTGGMSRATANGQVIVLNNFTLDTTYGSNTWKNLNNDAGIVIPCYSIGQQSWSDGNLNGIFDINEIGFPYVNLTLFNADGSTPNDIFGKPIQMAVTDVNGKYSIPNVPPGSYYMTVSIPPRYIISNFTTTGLVNNRFFPLNRTTPIFTMPGPDVVTVSSVSRCRQAYNKANVGINTPYVALGVRTFIDTNKNGIFDIDEKPLPNVTVLLLNNNGQPVMGSDGNPLKAVSNSQGYYYIDNVRLGYYIVQFVIPAGYSITPTKLVSTSNQVENNAFPNGRTDAFNLIITSSDIRSRFDNESNLYTAPYLDPTHDAGFVFTTMGVFGYVWNDVLQDGLFEMGSVPPGNFTVQLKSANQAVNGGLTTVPIGTVVATSPVAANGSFSIPNLQLGNYTLTLIPPSGSGWLTTKFNVTGSPTNSLLLGTFNSTMFTLDANDDDNIVCPFSQYKCKPVNLGVIRPSLKNVTGRVFKDYNCNGKYDISGQFGTAKDIPLSKIPVYIYYADSKTPFNSTLTDSTGSYSFFNLVQDGNYLITVGTPALPTGSGDKVETCRPTSVILPNTYTVPAGFADFSFITNEETCNDVPNLSVGCYVIGNSDENGPNTGEPVIVMFPYNSTQHNQITPLSFYYESGTTYGLAYDRSKKQLYASAFTKFGTDYGPGRLNAIYKIDTVTGRNSLYTRIDSFLEKDTEGTDDILGMDISLDTDFRISEIYRTAFGGIVINPYTRSLAVVGLQTRDIIIMPLDTQPNKTNTQRFTVPFGCTRTQDKYFWQPFAINFHQGKYYTGSVCGGPTIPDMNAIIHSFDPVTQVFTKVVTLPLNYSRGCKNFDSNTVCRNSTWQPWIDIDDNPQPVVASITFDGNDMVIGIRDREGDQGSFVSAPDILRICLVNGVYVPERDGKCGGAIGSHTGPSGYKGQIEGPGTGEFYNDNFRKGQIGHDDTGGLSVFQVPGFPEVASASFDATTVFEGVVKFYNNNNGTLRSSFQVYLTDNSDTVNPVTFGKASGLGQLVAHCSPKPITLGSIVFIDTNGNGIQEPWEQGKQGVAVSLLFANGTLIQKQSTDSLGLFKFINPPYQNQQYIITADSVTLSIIPSPLPTSSIPYNAATMVNGKATISNILILDPMIASSRYDLNFGVTN.

The N-terminal stretch at 1-35 (MGTIKTKFKNNYLKNSYLFIIYIILFNLVIGIANS) is a signal peptide. Asn95, Asn120, Asn137, and Asn198 each carry an N-linked (GlcNAc...) asparagine glycan. The Kelch 1 repeat unit spans residues 273–324 (NLFAVGNYVFFDVNRDGVHETTELFAPNVKVELYDAISSTRLIASTFTDLNG). Residues 298-359 (APNVKVELYD…SNGPDNVINA (62 aa)) enclose the CNA-B 1 domain. N-linked (GlcNAc...) asparagine glycans are attached at residues Asn372, Asn386, and Asn422. A CNA-B 2 domain is found at 423–469 (LSGITVQLTTPSHVVLKTAQTDYAGNYVFDDLSEGVYSVHFILPENY). Residue Asn493 is glycosylated (N-linked (GlcNAc...) asparagine). CNA-B domains lie at 551-599 (LPGV…PDGY), 676-745 (VANV…INLT), 803-871 (APFV…FTLN), 931-999 (AEGV…IDLS), 1057-1095 (LPNITMTLINNAEGGKVVQSVSTDSKGQYSFTNVPEGDY), and 1170-1231 (LSNT…FNSS). N-linked (GlcNAc...) asparagine glycosylation is present at Asn678. N-linked (GlcNAc...) asparagine glycans are attached at residues Asn1059, Asn1229, and Asn1239. The CNA-B 9 domain maps to 1277-1314 (ISNIPLSLISQKTNQIISSVVTDSNGKYQFEDVPPGDY). Residue Asn1329 is glycosylated (N-linked (GlcNAc...) asparagine). 8 CNA-B domains span residues 1391-1458 (SDVS…FKLT), 1494-1530 (LPGVELSLQDSNGKVLDTTTTDESGNYKFDNLLPGDY), 1602-1651 (LPGV…YKQV), 1708-1779 (LSDI…VTVK), 1824-1891 (SDVS…FKLT), 1927-1963 (LPGVELSLQDSNGKVLETTTTDESGNYKFDNLLPGDY), 2035-2086 (LPGV…QVAQ), and 2141-2177 (VEGIELNLVDKDGKVIQSTTSGPNGKYQFEDVPPGDY). An N-linked (GlcNAc...) asparagine glycan is attached at Asn1613. The tract at residues 1716 to 1740 (TDKDGNEISNTKSGPDGKYQFEDVP) is disordered. N-linked (GlcNAc...) asparagine glycosylation is found at Asn1759 and Asn1772. N-linked (GlcNAc...) asparagine glycosylation is present at Asn2046. 2 N-linked (GlcNAc...) asparagine glycosylation sites follow: Asn2192 and Asn2311. CNA-B domains follow at residues 2254 to 2321 (SDVS…FKLT), 2357 to 2402 (LPGV…TPIG), 2465 to 2514 (LPGV…YKQV), 2571 to 2640 (LSDI…NFVT), 2687 to 2754 (SDVS…FKLT), 2790 to 2835 (LPGV…TPIG), 2898 to 2947 (LPGV…YKQV), and 3004 to 3040 (LEGIELQLVDKDGKVIQSTTSGPDGKYQFEDVPPGDY). N-linked (GlcNAc...) asparagine glycosylation is present at Asn2476. Residues 2580-2603 (DKDGNEITNTKSGPDGKYQFEDVP) are disordered. Asn2622 is a glycosylation site (N-linked (GlcNAc...) asparagine). N-linked (GlcNAc...) asparagine glycosylation is found at Asn2801 and Asn2909. Residues Asn3048, Asn3055, and Asn3118 are each glycosylated (N-linked (GlcNAc...) asparagine). 4 consecutive CNA-B domains span residues 3117–3184 (SNVS…FKLT), 3220–3256 (LPGVELSLQDPNGIVIQTITTDSDGNYYFDNLLPGDY), 3328–3364 (LPGVQVIITSSNGTKIADLVTDENGKYALKDQVPGSY), and 3434–3470 (VEGIELQLVDKDGKVIQSTTSGPDGKYQFEDVPPGDY). N-linked (GlcNAc...) asparagine glycosylation occurs at Asn3339. Asn3485 carries an N-linked (GlcNAc...) asparagine glycan. The stretch at 3503-3549 (SCFAVSGPLDNQNLGLSLFYEIGTMVWIDSNNNGKFEQPSDVLKSDV) is one Kelch 2 repeat. CNA-B domains lie at 3547-3614 (SDVS…FKLT), 3650-3686 (LPGVELSLQDSNGKVLDTTTTDESGSYKFDNLLPGDY), and 3758-3809 (LPGV…QVAQ). N-linked (GlcNAc...) asparagine glycans are attached at residues Asn3769 and Asn3827. A CNA-B 33 domain is found at 3864 to 3900 (LSDITIRLTDKDGKVIQSTTSGPDGKYQFEDVPPGDY). Residue Asn3915 is glycosylated (N-linked (GlcNAc...) asparagine). CNA-B domains are found at residues 3980 to 4047 (SDVS…FKLT), 4083 to 4128 (LPGV…TPIG), 4191 to 4240 (LPGV…YKQV), 4297 to 4378 (LSDI…NFVT), 4425 to 4492 (SDVS…FKLT), 4528 to 4573 (LPGV…TPIG), 4636 to 4685 (LPGV…YKQV), and 4742 to 4778 (VEGIPLTLIDKYGNSIQSTASGPNGKYQFEDVPPGDY). Asn4202 is a glycosylation site (N-linked (GlcNAc...) asparagine). The interval 4286 to 4341 (NTGKQTDDSPPLSDITIRLTDKDGNEITKTKSRPDGNENSNTKSGPDGKYQFEDVP) is disordered. Over residues 4304-4321 (LTDKDGNEITKTKSRPDG) the composition is skewed to basic and acidic residues. N-linked (GlcNAc...) asparagine glycosylation occurs at Asn4360. Asn4647 carries N-linked (GlcNAc...) asparagine glycosylation. N-linked (GlcNAc...) asparagine glycans are attached at residues Asn4792 and Asn4918. 4 CNA-B domains span residues 4865–4928 (ITLT…FKLT), 4964–5009 (LPGV…TPIG), 5072–5123 (LPGV…QVAQ), and 5178–5214 (LEGIELQLVDKDGKVIQSTTSGPNGKYQFEDVPPGDY). The N-linked (GlcNAc...) asparagine glycan is linked to Asn5083. 3 N-linked (GlcNAc...) asparagine glycosylation sites follow: Asn5229, Asn5292, and Asn5348. Residues 5247-5293 (SCFAVSGPLDNQNLGLSPFYEIGTIVWIDSNNNDKFEQPSDIGKSNV) form a Kelch 3 repeat. CNA-B domains are found at residues 5291-5358 (SNVS…FKLT), 5394-5430 (LPGVELSLQDSNGKVLDTTTTDESGNYKFDNLLPGDY), 5502-5553 (LPGV…QVAQ), and 5608-5644 (LSDITIRLTDKDGNEITNTKSGPDGKYQFEDVPPGDY). A glycan (N-linked (GlcNAc...) asparagine) is linked at Asn5513. The N-linked (GlcNAc...) asparagine glycan is linked to Asn5659. 4 CNA-B domains span residues 5724-5791 (SDVS…FKLT), 5827-5872 (LPGV…TPIG), 5935-5984 (LPGV…YKQV), and 6041-6077 (VEGIELNLVDKDGKVIQSTTSGPDGKYQFEDVPPGDY). The N-linked (GlcNAc...) asparagine glycan is linked to Asn5946. N-linked (GlcNAc...) asparagine glycosylation is found at Asn6092 and Asn6155. CNA-B domains are found at residues 6154-6221 (SNVS…FKLT), 6257-6302 (LPGV…TPIG), 6365-6416 (LPGV…QDAQ), and 6471-6507 (LSDITIRLTDKDGNEITNTKSGPDGKYQFEDVPPGDY). Asn6376 carries N-linked (GlcNAc...) asparagine glycosylation. Asn6522 and Asn6535 each carry an N-linked (GlcNAc...) asparagine glycan. CNA-B domains follow at residues 6587-6654 (SDVS…FKLT), 6690-6726 (LEGVELSLQDPNGTVLQTITTDESGNYKFDNLLPGDY), 6798-6849 (LPGV…QVNQ), and 6904-6940 (VEGIPLTLIDKYGNSIQSTASGPNGKYQFEDVPPGDY). N-linked (GlcNAc...) asparagine glycosylation is found at Asn6701, Asn6809, and Asn6848. Residues Asn6954, Asn7080, Asn7137, and Asn7245 are each glycosylated (N-linked (GlcNAc...) asparagine). CNA-B domains are found at residues 7023–7090 (SDVS…FKLT), 7126–7171 (LAGV…TPIG), 7234–7285 (LPGV…QDAQ), 7340–7411 (LSDI…VTVK), 7456–7523 (SDVS…FKLT), 7559–7596 (LPGVELSLQDSNGKVLDTTTTTDESGNYKFDNLLPGDY), 7668–7719 (LTGV…QVAQ), and 7774–7810 (VEGIELNLVDKDDKVIQSTTSGPDGKYQFEDVPPGDY). The segment at 7351–7372 (DGNEITNTKSGPDGKYQFEDVP) is disordered. N-linked (GlcNAc...) asparagine glycosylation is found at Asn7391 and Asn7404. Residue Asn7679 is glycosylated (N-linked (GlcNAc...) asparagine). 2 N-linked (GlcNAc...) asparagine glycosylation sites follow: Asn7825 and Asn7837. CNA-B domains are found at residues 7887 to 7954 (SDVS…FKLT), 7990 to 8035 (LPGV…TPIG), 8098 to 8149 (LPGV…QVAQ), 8204 to 8265 (IPNI…FSLS), 8313 to 8374 (VGKS…VVDQ), 8420 to 8456 (LPGVELSLQDSNGKVLQTTTTNESGNYKFDNLPQGDY), and 8528 to 8587 (LPGI…PFDS). N-linked (GlcNAc...) asparagine glycans are attached at residues Asn8109 and Asn8255. 57 N-linked (GlcNAc...) asparagine glycosylation sites follow: Asn8441, Asn8539, Asn8629, Asn8636, Asn8655, Asn8693, Asn8753, Asn8811, Asn8896, Asn8930, Asn8976, Asn9023, Asn9073, Asn9087, Asn9123, Asn9137, Asn9146, Asn9149, Asn9186, Asn9297, Asn9305, Asn9349, Asn9409, Asn9419, Asn9533, Asn9543, Asn9556, Asn9601, Asn9709, Asn9718, Asn9786, Asn9839, Asn9850, Asn9867, Asn9891, Asn9941, Asn9957, Asn9989, Asn10042, Asn10096, Asn10111, Asn10174, Asn10267, Asn10315, Asn10348, Asn10360, Asn10379, Asn10394, Asn10431, Asn10477, Asn10552, Asn10581, Asn10715, Asn10786, Asn10802, Asn10943, and Asn11018. Residues 8592–8638 (CFDLLDKSITNANLGLIPLYNIGSDAWLDNLNNGVRRNDSLLVPNVT) form a Kelch 4 repeat. The region spanning 8634–8680 (VPNVTMSLYDNNGNLIETTITNSSGKYQFNDIQPGSYCVRATVPSNY) is the CNA-B 77 domain. Residues 8751–8810 (LPNVTVQLYDKVSGNILAATRSDDKGGYVVPNLLPSADYCVQFEVPPGYIVVVDSDDSVT) enclose the CNA-B 78 domain. Residues 8965–9014 (LPGVSVSLFSPNGTSIANTITDENGKYAFKDQVPGSYCIKMIIPPHYQQV) form the CNA-B 79 domain. Residues 9071 to 9107 (VPNITMTLLDSQGKQINSTITNANGFYQFVDVAPGNY) enclose the CNA-B 80 domain. One can recognise a CNA-B 81 domain in the interval 9185 to 9220 (ANVSLSLVNTGNSEIKTTTTNSQGKYSFGQLLAGNY). A CNA-B 82 domain is found at 9299 to 9332 (TITLTPNNTALPTQTTTTDVNGNYRFDNLVVGNY). CNA-B domains are found at residues 9407–9447 (LVNI…VVQF) and 9531–9569 (MANITVFLRSGSNLSQTIATTTTDANGTYIFTHLAPGNY). Residues 9659–9728 (VEGITVRIYD…ATGYISIDLS (70 aa)) form the CNA-B 85 domain. Residues 10044–10103 (TLFNADGSTPNDIFGKPIQMAVTDVNGKYSIPNVPPGSYYMTVSIPPRYIISNFTTTGLV) form the CNA-B 86 domain. A CNA-B 87 domain is found at 10172–10236 (LPNVTVLLLN…ITPTKLVSTS (65 aa)). A CNA-B 88 domain is found at 10313 to 10370 (PGNFTVQLKSANQAVNGGLTTVPIGTVVATSPVAANGSFSIPNLQLGNYTLTLIPPSG).

It belongs to the serine-aspartate repeat-containing protein (SDr) family.

Its subcellular location is the secreted. In Dictyostelium discoideum (Social amoeba), this protein is Colossin-A (colA).